Reading from the N-terminus, the 378-residue chain is Glutamate 5-kinase (378 aa).

An ATP-binding site is contributed by Lys19. 3 residues coordinate substrate: Ser59, Asp146, and Asn158. Thr178–Asp179 lines the ATP pocket. Residues Arg285–Thr363 form the PUA domain.

Belongs to the glutamate 5-kinase family.

The protein localises to the cytoplasm. It carries out the reaction L-glutamate + ATP = L-glutamyl 5-phosphate + ADP. The protein operates within amino-acid biosynthesis; L-proline biosynthesis; L-glutamate 5-semialdehyde from L-glutamate: step 1/2. Its function is as follows. Catalyzes the transfer of a phosphate group to glutamate to form L-glutamate 5-phosphate. The sequence is that of Glutamate 5-kinase from Polaromonas naphthalenivorans (strain CJ2).